Reading from the N-terminus, the 67-residue chain is DNA-directed RNA polymerase subunit omega (67 aa).

It belongs to the RNA polymerase subunit omega family. The RNAP catalytic core consists of 2 alpha, 1 beta, 1 beta' and 1 omega subunit. When a sigma factor is associated with the core the holoenzyme is formed, which can initiate transcription.

It catalyses the reaction RNA(n) + a ribonucleoside 5'-triphosphate = RNA(n+1) + diphosphate. Its function is as follows. Promotes RNA polymerase assembly. Latches the N- and C-terminal regions of the beta' subunit thereby facilitating its interaction with the beta and alpha subunits. In Bordetella petrii (strain ATCC BAA-461 / DSM 12804 / CCUG 43448), this protein is DNA-directed RNA polymerase subunit omega.